A 276-amino-acid polypeptide reads, in one-letter code: Malectin-B (276 aa).

A signal peptide spans 1–26 (MLSIRTVLGPLAAILLTVIGPFGAHG). Over 27–253 (SGLADKVMWA…TPNPYASDNS (227 aa)) the chain is Lumenal. The a carbohydrate site is built by Tyr67, Tyr89, Tyr116, Phe117, and Asp186. Positions 202-249 (DVPQLQPHPGLEKKEEEEEEEEEEGSPSKKQSNKNRVQSGPRTPNPYA) are disordered. Positions 216-226 (EEEEEEEEEEG) are enriched in acidic residues. Residues 229–249 (SKKQSNKNRVQSGPRTPNPYA) are compositionally biased toward polar residues. An N-linked (GlcNAc...) asparagine glycan is attached at Asn252. The chain crosses the membrane as a helical span at residues 254-274 (SLMFPILVAFGVFIPTLFCLC). The Cytoplasmic segment spans residues 275 to 276 (RL).

It belongs to the malectin family.

Its subcellular location is the endoplasmic reticulum membrane. Carbohydrate-binding protein with a strong ligand preference for Glc2-N-glycan. May play a role in the early steps of protein N-glycosylation. Can bind di- or higher oligomers but not monomers of glucose, including maltose, maltotriose, maltotetraose, maltoheptaose, nigerose, kojibose, cellobiose and isomaltose, although based on their subcellular locations, these are unlikely to all be physiological ligands. The chain is Malectin-B from Xenopus laevis (African clawed frog).